The primary structure comprises 195 residues: Imidazoleglycerol-phosphate dehydratase (195 aa).

Belongs to the imidazoleglycerol-phosphate dehydratase family.

The protein resides in the cytoplasm. It catalyses the reaction D-erythro-1-(imidazol-4-yl)glycerol 3-phosphate = 3-(imidazol-4-yl)-2-oxopropyl phosphate + H2O. It functions in the pathway amino-acid biosynthesis; L-histidine biosynthesis; L-histidine from 5-phospho-alpha-D-ribose 1-diphosphate: step 6/9. This is Imidazoleglycerol-phosphate dehydratase from Acetivibrio thermocellus (strain ATCC 27405 / DSM 1237 / JCM 9322 / NBRC 103400 / NCIMB 10682 / NRRL B-4536 / VPI 7372) (Clostridium thermocellum).